The chain runs to 434 residues: Trigger factor 2 (434 aa).

One can recognise a PPIase FKBP-type domain in the interval 164 to 247 (GDTVTVDYDC…VKKVERIEIL (84 aa)).

Belongs to the FKBP-type PPIase family. Tig subfamily.

Its subcellular location is the cytoplasm. It catalyses the reaction [protein]-peptidylproline (omega=180) = [protein]-peptidylproline (omega=0). Functionally, involved in protein export. Acts as a chaperone by maintaining the newly synthesized protein in an open conformation. Functions as a peptidyl-prolyl cis-trans isomerase. In Desulfitobacterium hafniense (strain Y51), this protein is Trigger factor 2.